The following is a 506-amino-acid chain: ATP synthase subunit alpha (506 aa).

Position 170-177 (170-177 (GDRQTGKT)) interacts with ATP.

It belongs to the ATPase alpha/beta chains family. As to quaternary structure, F-type ATPases have 2 components, CF(1) - the catalytic core - and CF(0) - the membrane proton channel. CF(1) has five subunits: alpha(3), beta(3), gamma(1), delta(1), epsilon(1). CF(0) has four main subunits: a(1), b(1), b'(1) and c(9-12).

Its subcellular location is the cellular thylakoid membrane. The enzyme catalyses ATP + H2O + 4 H(+)(in) = ADP + phosphate + 5 H(+)(out). Produces ATP from ADP in the presence of a proton gradient across the membrane. The alpha chain is a regulatory subunit. The protein is ATP synthase subunit alpha of Synechococcus sp. (strain JA-2-3B'a(2-13)) (Cyanobacteria bacterium Yellowstone B-Prime).